The chain runs to 527 residues: Acyl-coenzyme A thioesterase 4, mitochondrial (527 aa).

Residues 1-75 (MMTPIGIRIR…FLFDPPPIRF (75 aa)) constitute a mitochondrion transit peptide. 2 HotDog ACOT-type domains span residues 172 to 294 (ILYN…RDSK) and 370 to 487 (KDTC…GPEA).

The protein belongs to the acyl coenzyme A hydrolase family. Mostly expressed at low levels in glandular trichomes (lupulin glands), and, to a lower extent, in stems, leaves, flowers and cones.

The protein localises to the mitochondrion. It catalyses the reaction 2-methylpropanoyl-CoA + H2O = 2-methylpropanoate + CoA + H(+). It carries out the reaction propanoyl-CoA + H2O = propanoate + CoA + H(+). The enzyme catalyses octanoyl-CoA + H2O = octanoate + CoA + H(+). The catalysed reaction is butanoyl-CoA + H2O = butanoate + CoA + H(+). It catalyses the reaction 3-methylbutanoyl-CoA + H2O = 3-methylbutanoate + CoA + H(+). It carries out the reaction 2-methylbutanoyl-CoA + H2O = 2-methylbutanoate + CoA + H(+). In terms of biological role, acyl-CoA thioesterases are a group of enzymes that catalyze the hydrolysis of acyl-CoAs to the free fatty acid and coenzyme A (CoASH), providing the potential to regulate intracellular levels of acyl-CoAs, free fatty acids and CoASH. Active on acyl CoAs with short chains (propanoyl-CoA and butanoyl-CoA), branched short chains (2-methylpropanoyl-CoA, 2-methylbutanoyl-CoA and 3-methylbutanoyl-CoA) and medium chains (octanoyl-CoA). The sequence is that of Acyl-coenzyme A thioesterase 4, mitochondrial from Humulus lupulus (European hop).